Reading from the N-terminus, the 222-residue chain is Probable transaldolase (222 aa).

Catalysis depends on Lys-91, which acts as the Schiff-base intermediate with substrate.

It belongs to the transaldolase family. Type 3B subfamily.

Its subcellular location is the cytoplasm. It carries out the reaction D-sedoheptulose 7-phosphate + D-glyceraldehyde 3-phosphate = D-erythrose 4-phosphate + beta-D-fructose 6-phosphate. It participates in carbohydrate degradation; pentose phosphate pathway; D-glyceraldehyde 3-phosphate and beta-D-fructose 6-phosphate from D-ribose 5-phosphate and D-xylulose 5-phosphate (non-oxidative stage): step 2/3. Transaldolase is important for the balance of metabolites in the pentose-phosphate pathway. The protein is Probable transaldolase of Chlorobium chlorochromatii (strain CaD3).